We begin with the raw amino-acid sequence, 56 residues long: Ovomucoid (56 aa).

Residues valine 6–cysteine 56 form the Kazal-like domain. 3 cysteine pairs are disulfide-bonded: cysteine 8–cysteine 38, cysteine 16–cysteine 35, and cysteine 24–cysteine 56. A glycan (N-linked (GlcNAc...) asparagine) is linked at asparagine 45.

It localises to the secreted. This is Ovomucoid from Callipepla californica (California quail).